Here is a 92-residue protein sequence, read N- to C-terminus: uncharacterized protein (92 aa).

A signal peptide spans 1 to 29; that stretch reads MAAQTDYKKQVVGILLSLAFVLFVFSFSE.

This is an uncharacterized protein from Bacillus subtilis (strain 168).